A 455-amino-acid polypeptide reads, in one-letter code: 3-isopropylmalate dehydratase large subunit (455 aa).

Residues Cys336, Cys396, and Cys399 each coordinate [4Fe-4S] cluster.

This sequence belongs to the aconitase/IPM isomerase family. LeuC type 1 subfamily. Heterodimer of LeuC and LeuD. Requires [4Fe-4S] cluster as cofactor.

It carries out the reaction (2R,3S)-3-isopropylmalate = (2S)-2-isopropylmalate. It participates in amino-acid biosynthesis; L-leucine biosynthesis; L-leucine from 3-methyl-2-oxobutanoate: step 2/4. Catalyzes the isomerization between 2-isopropylmalate and 3-isopropylmalate, via the formation of 2-isopropylmaleate. The chain is 3-isopropylmalate dehydratase large subunit from Staphylococcus aureus (strain MRSA252).